We begin with the raw amino-acid sequence, 486 residues long: Palmitoyltransferase pfa4 (486 aa).

The Cytoplasmic segment spans residues 1–15 (MTNLQTGPTTRGLQR). The chain crosses the membrane as a helical span at residues 16–36 (FAIPAVCGLIIFLGYYSQYLF). Residues 37–51 (NTSADLAPGPLTCRE) are Lumenal-facing. A helical transmembrane segment spans residues 52-72 (SLIFNILLVCLWLTYYQACTV). Residues 73-146 (DPGQYKFPPK…NCVSLQTFPH (74 aa)) are Cytoplasmic-facing. The span at 81 to 91 (PKEKEDGDNNN) shows a compositional bias: basic and acidic residues. A disordered region spans residues 81 to 101 (PKEKEDGDNNNKRGGRGPQKA). The 51-residue stretch at 102-152 (KWCKKCDAPKPPRAHHCRHCARCIPRMDHHCPWTGNCVSLQTFPHFLRFLV) folds into the DHHC domain. The S-palmitoyl cysteine intermediate role is filled by Cys132. The chain crosses the membrane as a helical span at residues 147 to 166 (FLRFLVYTNAALVYFARLLW). Topologically, residues 167–178 (TRLYYGLWDQRH) are lumenal. The chain crosses the membrane as a helical span at residues 179–201 (VPAYLGPSVGALLGCTMLSIAWF). Residues 202-486 (ATQFALMVLL…RKVKSNGVHE (285 aa)) lie on the Cytoplasmic side of the membrane. Positions 314–420 (NDRVGMWPPP…QDGRAWMNSE (107 aa)) are disordered. Basic and acidic residues-rich tracts occupy residues 324 to 333 (DPEKLRRERA) and 346 to 376 (LNTE…DLRR). Positions 386–399 (EEDEIMAELEEDEG) are enriched in acidic residues.

This sequence belongs to the DHHC palmitoyltransferase family. PFA4 subfamily.

The protein localises to the endoplasmic reticulum membrane. The catalysed reaction is L-cysteinyl-[protein] + hexadecanoyl-CoA = S-hexadecanoyl-L-cysteinyl-[protein] + CoA. In terms of biological role, mediates the reversible addition of palmitate to target proteins, thereby regulating their membrane association and biological function. The chain is Palmitoyltransferase pfa4 from Neurospora crassa (strain ATCC 24698 / 74-OR23-1A / CBS 708.71 / DSM 1257 / FGSC 987).